The sequence spans 427 residues: NADPH-dependent stearoyl-CoA 9-desaturase (427 aa).

The Fe cation site is built by H90, H94, H125, H129, H130, H304, H308, and H309.

It belongs to the fatty acid desaturase type 1 family. In terms of assembly, interacts with the electron transfer protein Rv3230c to form a functional acyl-CoA desaturase complex. The cofactor is Fe(2+). Post-translationally, is rapidly degraded by a mycobacterial protein degradation system that specifically targets the residues LAA at the C-terminus, leading to a post-translational proteolytic regulation of DesA3 essential activity.

The protein localises to the cell membrane. It catalyses the reaction octadecanoyl-CoA + NADPH + O2 + H(+) = (9Z)-octadecenoyl-CoA + NADP(+) + 2 H2O. Its pathway is lipid metabolism; fatty acid metabolism. Is likely involved in the aerobic desaturation system responsible for the synthesis of oleic acid from stearoyl-CoA; oleic acid is a precursor of mycobacterial membrane phospholipids and triglycerides. Catalyzes the conversion of stearoyl-CoA to oleoyl-CoA by introduction of a cis double bond between carbons 9 and 10 of the acyl chain. Requires the electron transfer partner Rv3230c to pass two electrons from NADPH to its active site diiron center. Is also able to catalyze the 9-desaturation of palmitoyl-CoA to palmitoleoyl-CoA. This is NADPH-dependent stearoyl-CoA 9-desaturase (desA3) from Mycobacterium tuberculosis (strain CDC 1551 / Oshkosh).